A 511-amino-acid polypeptide reads, in one-letter code: MKTALLSVSDKTGIVEFARGLVKADFRIISTGGTKKVLEEAGLSIVSVEAITNFPEMLDGRVKTLHPAIHGGLLARRDLPEHLAALKEHNIDLIDLVCVNLYPFKSTIMQNGVTEAEAIEQIDIGGPSMLRSAAKNFASVLPVVDPKDYQPVLAALAHQTDNVKFRRALALKVFQHTAAYDTLIAQYLGQNGEIFPDELTKTYTKKQVMRYGENSHQKAAFYEDALPVPFSIAQAQQLHGKELSYNNIKDADAALKMSAEFNQPAVVAVKHMNPCGIGLGQNIEEAWDRAYEADSMSIFGGIIVLNRPVDLATAEKMHKLFLEIIIAPSFEKEAFTVLAQKKNLRIMTVDFNQHQDAKELETVSVMGGLLVQEQDAVVETATDFKVVSKRQPTESELKAMVFGQTVVKHVKSNAIVITTDQQTLGIGAGQMNRIGSVEIAVKQAEGSANFKNAVMASDAFFPMEDCVEYAAKHGIKAIVEPGGSIKDQASIDKADELGISLIFSGRRHFRH.

In terms of domain architecture, MGS-like spans 1–144 (MKTALLSVSD…KNFASVLPVV (144 aa)).

It belongs to the PurH family.

The catalysed reaction is (6R)-10-formyltetrahydrofolate + 5-amino-1-(5-phospho-beta-D-ribosyl)imidazole-4-carboxamide = 5-formamido-1-(5-phospho-D-ribosyl)imidazole-4-carboxamide + (6S)-5,6,7,8-tetrahydrofolate. The enzyme catalyses IMP + H2O = 5-formamido-1-(5-phospho-D-ribosyl)imidazole-4-carboxamide. It functions in the pathway purine metabolism; IMP biosynthesis via de novo pathway; 5-formamido-1-(5-phospho-D-ribosyl)imidazole-4-carboxamide from 5-amino-1-(5-phospho-D-ribosyl)imidazole-4-carboxamide (10-formyl THF route): step 1/1. The protein operates within purine metabolism; IMP biosynthesis via de novo pathway; IMP from 5-formamido-1-(5-phospho-D-ribosyl)imidazole-4-carboxamide: step 1/1. The protein is Bifunctional purine biosynthesis protein PurH of Pediococcus pentosaceus (strain ATCC 25745 / CCUG 21536 / LMG 10740 / 183-1w).